The following is a 122-amino-acid chain: Putative syntaxin 6 (122 aa).

Over 1–100 the chain is Cytoplasmic; it reads MSNYRYSKLN…AKLTHLEDES (100 aa). The 63-residue stretch at 31–93 folds into the t-SNARE coiled-coil homology domain; the sequence is EQIIQEQDDE…DTAMKKMAKL (63 aa). A helical; Anchor for type IV membrane protein membrane pass occupies residues 101-121; that stretch reads SQCKMIMVLSALLFFLVFVLL. Val122 is a topological domain (extracellular).

Belongs to the syntaxin family.

It is found in the membrane. Its function is as follows. SNARE promoting movement of transport vesicles to target membranes. Potentially functions in retrograde trafficking and in the endocytic recycling pathway. In Caenorhabditis elegans, this protein is Putative syntaxin 6 (syx-6).